A 310-amino-acid chain; its full sequence is UDP-N-acetylenolpyruvoylglucosamine reductase (310 aa).

The FAD-binding PCMH-type domain maps to 23-188 (KVGGNAEIFF…LKAVFKVNKG (166 aa)). Residue Arg-168 is part of the active site. Ser-217 serves as the catalytic Proton donor. Residue Glu-287 is part of the active site.

This sequence belongs to the MurB family. FAD is required as a cofactor.

It is found in the cytoplasm. It carries out the reaction UDP-N-acetyl-alpha-D-muramate + NADP(+) = UDP-N-acetyl-3-O-(1-carboxyvinyl)-alpha-D-glucosamine + NADPH + H(+). Its pathway is cell wall biogenesis; peptidoglycan biosynthesis. Cell wall formation. In Rickettsia bellii (strain OSU 85-389), this protein is UDP-N-acetylenolpyruvoylglucosamine reductase.